The following is a 344-amino-acid chain: Phosphate acyltransferase (344 aa).

This sequence belongs to the PlsX family. In terms of assembly, homodimer. Probably interacts with PlsY.

Its subcellular location is the cytoplasm. It catalyses the reaction a fatty acyl-[ACP] + phosphate = an acyl phosphate + holo-[ACP]. It functions in the pathway lipid metabolism; phospholipid metabolism. Functionally, catalyzes the reversible formation of acyl-phosphate (acyl-PO(4)) from acyl-[acyl-carrier-protein] (acyl-ACP). This enzyme utilizes acyl-ACP as fatty acyl donor, but not acyl-CoA. This chain is Phosphate acyltransferase, found in Thermosynechococcus vestitus (strain NIES-2133 / IAM M-273 / BP-1).